A 70-amino-acid polypeptide reads, in one-letter code: Envelope small membrane protein (70 aa).

Residue Gly2 is the site of N-myristoyl glycine; by host attachment. The endoplasmic reticulum retention signal stretch occupies residues 2–15 (GSLWSKISQLFVDA). Residues 2–25 (GSLWSKISQLFVDAFTEFLVSVVD) are Virion surface-facing. A helical membrane pass occupies residues 26 to 46 (IAIFLAILFGFTVAGWLLVFL). Residues 47–70 (LRVVCSALLRSRSAIHSPELSKVL) are Intravirion-facing.

It belongs to the arteriviridae E protein family. Homooligomer. Associates with itself into higher-order structures, including dimers, trimers and tetramers. Associates with the GP2a-GP3-GP4 complex. Post-translationally, myristoylated. Not glycosylated.

It is found in the virion membrane. It localises to the host endoplasmic reticulum membrane. Its subcellular location is the host Golgi apparatus membrane. The protein resides in the secreted. Minor envelope protein. May function as a viroporin in the virion envelope that facilitates uncoating of the virus in order to release the genomic RNA into the cytoplasm for subsequent replication. This Sus scrofa (Pig) protein is Envelope small membrane protein (GP2b).